A 135-amino-acid polypeptide reads, in one-letter code: Small ribosomal subunit protein bS6 (135 aa).

N6-acetyllysine is present on K93. The disordered stretch occupies residues 98 to 135 (EASPMVKAKDERRERRDDFANETADDAEAGDSEEEEEE). Over residues 104-116 (KAKDERRERRDDF) the composition is skewed to basic and acidic residues. The segment covering 120-135 (TADDAEAGDSEEEEEE) has biased composition (acidic residues).

It belongs to the bacterial ribosomal protein bS6 family. In terms of assembly, part of the 30S ribosomal subunit. Interacts weakly with uL2 in one of the 3.5 A resolved structures. Post-translationally, 5 different forms of the protein, varying only in the number of C-terminal glutamate residues, were isolated. The sequence shown is form bS6-6, which is the longest. The first two Glu are encoded by the rpsF gene, the other Glu are added post-translationally by the RimK enzyme.

Its function is as follows. Binds together with bS18 to 16S ribosomal RNA. The sequence is that of Small ribosomal subunit protein bS6 (rpsF) from Escherichia coli (strain K12).